The sequence spans 122 residues: UPF0102 protein CE1920 (122 aa).

This sequence belongs to the UPF0102 family.

The chain is UPF0102 protein CE1920 from Corynebacterium efficiens (strain DSM 44549 / YS-314 / AJ 12310 / JCM 11189 / NBRC 100395).